The primary structure comprises 140 residues: Large ribosomal subunit protein uL13 (140 aa).

Belongs to the universal ribosomal protein uL13 family. Part of the 50S ribosomal subunit.

This protein is one of the early assembly proteins of the 50S ribosomal subunit, although it is not seen to bind rRNA by itself. It is important during the early stages of 50S assembly. This Nautilia profundicola (strain ATCC BAA-1463 / DSM 18972 / AmH) protein is Large ribosomal subunit protein uL13.